Consider the following 816-residue polypeptide: Probable E3 ubiquitin-protein ligase hulA (816 aa).

Positions 1–112 (MGSNLPAQPN…QMGGDEMLTR (112 aa)) constitute a C2 domain. Disordered regions lie at residues 134 to 238 (NLST…GWER) and 254 to 354 (RTTT…YFVD). Positions 160-178 (VPQVAPSSSHPAASGAAPV) are enriched in low complexity. Residues 181–192 (SASNPSLNPQRV) show a composition bias toward polar residues. Low complexity predominate over residues 193 to 213 (PSTTRPSSTAAPASAAGAAAS). Composition is skewed to polar residues over residues 214 to 227 (NTHG…SFED) and 254 to 267 (RTTT…NYNE). In terms of domain architecture, WW 1 spans 230–263 (GRLPAGWERREDNLGRTYYVDHNTRTTTWTRPSS). The segment covering 268 to 295 (HAQRSQREANMQLERRAHQSRMLPEDRT) has biased composition (basic and acidic residues). Residues 296-310 (GANSPNLPESSQQAH) show a composition bias toward polar residues. Residues 325 to 334 (ATGATTAGTG) are compositionally biased toward low complexity. 2 WW domains span residues 334–367 (GELP…DPRR) and 394–427 (GPLP…DPRL). Residues 483 to 816 (SASDLKKRLM…VEETLGFGQE (334 aa)) form the HECT domain. The active-site Glycyl thioester intermediate is Cys784.

This sequence belongs to the RSP5/NEDD4 family. In terms of assembly, interacts with creD.

It localises to the cytoplasm. The enzyme catalyses S-ubiquitinyl-[E2 ubiquitin-conjugating enzyme]-L-cysteine + [acceptor protein]-L-lysine = [E2 ubiquitin-conjugating enzyme]-L-cysteine + N(6)-ubiquitinyl-[acceptor protein]-L-lysine.. It participates in protein modification; protein ubiquitination. Its function is as follows. E3 ubiquitin-protein ligase which accepts ubiquitin from an E2 ubiquitin-conjugating enzyme in the form of a thioester and then directly transfers the ubiquitin to targeted substrates. Probably involved in the regulatory network controlling carbon source utilization. In Neosartorya fischeri (strain ATCC 1020 / DSM 3700 / CBS 544.65 / FGSC A1164 / JCM 1740 / NRRL 181 / WB 181) (Aspergillus fischerianus), this protein is Probable E3 ubiquitin-protein ligase hulA (hulA).